The primary structure comprises 158 residues: Regenerating islet-derived protein 4 (158 aa).

The first 22 residues, 1-22 (MASRSMRLLLLLSCLAKTGVLG), serve as a signal peptide directing secretion. Cysteine 30 and cysteine 41 are disulfide-bonded. In terms of domain architecture, C-type lectin spans 37–155 (HKSNCYGYFR…CNKRQHFLCK (119 aa)). N-linked (GlcNAc...) asparagine glycosylation occurs at asparagine 50. Disulfide bonds link cysteine 58–cysteine 154 and cysteine 129–cysteine 146. A carbohydrate contacts are provided by residues 98–103 (DPQKRQ) and 135–137 (NNN).

As to expression, highly expressed in the gastrointestinal tract including the duodenum, jejunum, ileum, ileocecum, appendix, descending colon, pancreas and small intestine. Weakly expressed in normal colon and stomach. Strongly expressed in most colorectal tumors than in normal colon. Preferentially expressed in mucinous tumors and in some cases neuro-endocrine tumors. Expressed in mucus-secreting cells and enterocyte-like cells. In small intestine expressed at the basal perinuclear zone of goblet cells.

It is found in the secreted. Calcium-independent lectin displaying mannose-binding specificity and able to maintain carbohydrate recognition activity in an acidic environment. May be involved in inflammatory and metaplastic responses of the gastrointestinal epithelium. In Homo sapiens (Human), this protein is Regenerating islet-derived protein 4 (REG4).